Consider the following 1217-residue polypeptide: ATP-dependent helicase/nuclease subunit A (1217 aa).

The UvrD-like helicase ATP-binding domain maps to 10–475 (VIWTDAQWQS…IDLSQNFRSR (466 aa)). 31 to 38 (AAAGSGKT) is an ATP binding site. The 311-residue stretch at 476 to 786 (KEVLSTTNYI…RMMTIHSSKG (311 aa)) folds into the UvrD-like helicase C-terminal domain.

This sequence belongs to the helicase family. AddA subfamily. As to quaternary structure, heterodimer of AddA and AddB/RexB. It depends on Mg(2+) as a cofactor.

It carries out the reaction Couples ATP hydrolysis with the unwinding of duplex DNA by translocating in the 3'-5' direction.. The catalysed reaction is ATP + H2O = ADP + phosphate + H(+). Functionally, the heterodimer acts as both an ATP-dependent DNA helicase and an ATP-dependent, dual-direction single-stranded exonuclease. Recognizes the chi site generating a DNA molecule suitable for the initiation of homologous recombination. The AddA nuclease domain is required for chi fragment generation; this subunit has the helicase and 3' -&gt; 5' nuclease activities. In Staphylococcus aureus (strain MRSA252), this protein is ATP-dependent helicase/nuclease subunit A.